A 370-amino-acid polypeptide reads, in one-letter code: tRNA-specific 2-thiouridylase MnmA (370 aa).

ATP-binding positions include Ala7 to Ser14 and Met34. The interaction with target base in tRNA stretch occupies residues Asn104 to Asp106. Cys109 (nucleophile) is an active-site residue. A disulfide bond links Cys109 and Cys202. Gly134 serves as a coordination point for ATP. The tract at residues Lys152 to Gln154 is interaction with tRNA. The Cysteine persulfide intermediate role is filled by Cys202. Positions Arg308–Tyr309 are interaction with tRNA.

It belongs to the MnmA/TRMU family.

It localises to the cytoplasm. It catalyses the reaction S-sulfanyl-L-cysteinyl-[protein] + uridine(34) in tRNA + AH2 + ATP = 2-thiouridine(34) in tRNA + L-cysteinyl-[protein] + A + AMP + diphosphate + H(+). Its function is as follows. Catalyzes the 2-thiolation of uridine at the wobble position (U34) of tRNA, leading to the formation of s(2)U34. The polypeptide is tRNA-specific 2-thiouridylase MnmA (Mycoplasma mobile (strain ATCC 43663 / 163K / NCTC 11711) (Mesomycoplasma mobile)).